We begin with the raw amino-acid sequence, 508 residues long: BTB/POZ domain-containing protein At3g03510 (508 aa).

The 67-residue stretch at 11-77 (QDLDLYVKGV…CYGYKIELSA (67 aa)) folds into the BTB domain. The NPH3 domain maps to 156 to 414 (TRLLQDLITL…MQVLFVSQMQ (259 aa)). Phosphotyrosine is present on Tyr355.

This sequence belongs to the NPH3 family.

The protein operates within protein modification; protein ubiquitination. May act as a substrate-specific adapter of an E3 ubiquitin-protein ligase complex (CUL3-RBX1-BTB) which mediates the ubiquitination and subsequent proteasomal degradation of target proteins. This Arabidopsis thaliana (Mouse-ear cress) protein is BTB/POZ domain-containing protein At3g03510.